The primary structure comprises 172 residues: Zinc finger C2HC domain-containing protein 1B (172 aa).

2 C2HC/C3H-type zinc fingers span residues 14-43 (KLFP…VFNK) and 117-146 (DYIQ…QTSR). Zn(2+) contacts are provided by cysteine 18, cysteine 21, histidine 33, cysteine 37, cysteine 121, cysteine 124, histidine 136, and cysteine 140.

This sequence belongs to the ZC2HC1 family. It depends on Zn(2+) as a cofactor.

The protein is Zinc finger C2HC domain-containing protein 1B (Zc2hc1b) of Mus musculus (Mouse).